The sequence spans 266 residues: ATP synthase subunit a (266 aa).

Helical transmembrane passes span 33–53, 95–115, 141–161, 206–226, and 237–257; these read FWTL…LFLA, VIAP…LMDL, DVNI…FYSI, LFGN…LLPW, and AIFH…LTIV.

The protein belongs to the ATPase A chain family. As to quaternary structure, F-type ATPases have 2 components, CF(1) - the catalytic core - and CF(0) - the membrane proton channel. CF(1) has five subunits: alpha(3), beta(3), gamma(1), delta(1), epsilon(1). CF(0) has three main subunits: a(1), b(2) and c(9-12). The alpha and beta chains form an alternating ring which encloses part of the gamma chain. CF(1) is attached to CF(0) by a central stalk formed by the gamma and epsilon chains, while a peripheral stalk is formed by the delta and b chains.

The protein localises to the cell inner membrane. In terms of biological role, key component of the proton channel; it plays a direct role in the translocation of protons across the membrane. The chain is ATP synthase subunit a from Klebsiella pneumoniae subsp. pneumoniae (strain ATCC 700721 / MGH 78578).